The primary structure comprises 143 residues: Large ribosomal subunit protein uL13 (143 aa).

This sequence belongs to the universal ribosomal protein uL13 family. Part of the 50S ribosomal subunit.

This protein is one of the early assembly proteins of the 50S ribosomal subunit, although it is not seen to bind rRNA by itself. It is important during the early stages of 50S assembly. This is Large ribosomal subunit protein uL13 from Alkaliphilus oremlandii (strain OhILAs) (Clostridium oremlandii (strain OhILAs)).